A 243-amino-acid polypeptide reads, in one-letter code: Ion-translocating oxidoreductase complex subunit E (243 aa).

6 helical membrane passes run 40 to 60 (LGMG…ISAL), 72 to 92 (AFIL…NAWL), 94 to 114 (DLHK…AILG), 129 to 149 (ALDG…VGAI), 152 to 172 (ILGS…HFAF), and 183 to 203 (GFLI…LFAL).

The protein belongs to the NqrDE/RnfAE family. As to quaternary structure, the complex is composed of six subunits: RnfA, RnfB, RnfC, RnfD, RnfE and RnfG.

Its subcellular location is the cellular chromatophore membrane. Functionally, part of a membrane-bound complex that couples electron transfer with translocation of ions across the membrane. Required for nitrogen fixation. Involved in electron transfer to nitrogenase. In Rhodobacter capsulatus (Rhodopseudomonas capsulata), this protein is Ion-translocating oxidoreductase complex subunit E.